The chain runs to 937 residues: MORC family CW-type zinc finger protein 4 (937 aa).

The CW-type zinc finger occupies 420–472 (KVPDQTWVQCDECLKWRKLPGKIDPSMLPARWFCYYNSHPKYRRCSVPEEQEL). Zn(2+) is bound by residues C429, C432, C453, and C464. A disordered region spans residues 606 to 637 (PEGENSHDKSSSERSTPPYLFPEYPEASKNTG). Residues 762-876 (KLKNQRELEE…LEMLQKAQVS (115 aa)) adopt a coiled-coil conformation.

As to expression, expressed at low levels in normal tissues, with highest expression levels in placenta and testis. Expression is significantly increased in subset of diffuse large B-cell lymphomas.

It is found in the nucleus. Functionally, histone methylation reader which binds to non-methylated (H3K4me0), monomethylated (H3K4me1), dimethylated (H3K4me2) and trimethylated (H3K4me3) 'Lys-4' on histone H3. The order of binding preference is H3K4me3 &gt; H3K4me2 &gt; H3K4me1 &gt; H3K4me0. The polypeptide is MORC family CW-type zinc finger protein 4 (MORC4) (Homo sapiens (Human)).